The chain runs to 256 residues: Phosphonates import ATP-binding protein PhnC (256 aa).

The ABC transporter domain occupies 7–251; sequence IEMKNVTKVY…VFDNIYNGGK (245 aa). 40-47 lines the ATP pocket; that stretch reads GLSGAGKS.

Belongs to the ABC transporter superfamily. Phosphonates importer (TC 3.A.1.9.1) family. The complex is composed of two ATP-binding proteins (PhnC), two transmembrane proteins (PhnE) and a solute-binding protein (PhnD).

The protein localises to the cell membrane. The catalysed reaction is phosphonate(out) + ATP + H2O = phosphonate(in) + ADP + phosphate + H(+). Its function is as follows. Part of the ABC transporter complex PhnCDE involved in phosphonates import. Responsible for energy coupling to the transport system. In Lactobacillus delbrueckii subsp. bulgaricus (strain ATCC 11842 / DSM 20081 / BCRC 10696 / JCM 1002 / NBRC 13953 / NCIMB 11778 / NCTC 12712 / WDCM 00102 / Lb 14), this protein is Phosphonates import ATP-binding protein PhnC.